The sequence spans 203 residues: MSNRGMLIVLSGPSGVGKGTVRQAMLEDEFRDFHYSVSMTTRKPRPGEQDGVDYYFVSKEEFEQEIANDGMLEYAQYVDNYYGTPMKYVNQTLESGRDVLLEIEVQGAMQVREKCPDGVFIFLTPPDLLELRNRIQKRGTDDQATIDKRMQKAADEIRMMENYDYAVVNDEIPNAVQRIEKIIESEHLRVPRVIDQYKKMIGE.

The region spanning 5-184 is the Guanylate kinase-like domain; it reads GMLIVLSGPS…AVQRIEKIIE (180 aa). 12–19 contacts ATP; sequence GPSGVGKG.

Belongs to the guanylate kinase family.

It localises to the cytoplasm. The enzyme catalyses GMP + ATP = GDP + ADP. Functionally, essential for recycling GMP and indirectly, cGMP. The chain is Guanylate kinase from Latilactobacillus sakei subsp. sakei (strain 23K) (Lactobacillus sakei subsp. sakei).